The primary structure comprises 260 residues: Thiazole synthase (260 aa).

The active-site Schiff-base intermediate with DXP is lysine 96. Residues glycine 157, 183–184 (AG), and 205–206 (AS) each bind 1-deoxy-D-xylulose 5-phosphate.

Belongs to the ThiG family. In terms of assembly, homotetramer. Forms heterodimers with either ThiH or ThiS.

It localises to the cytoplasm. It carries out the reaction [ThiS sulfur-carrier protein]-C-terminal-Gly-aminoethanethioate + 2-iminoacetate + 1-deoxy-D-xylulose 5-phosphate = [ThiS sulfur-carrier protein]-C-terminal Gly-Gly + 2-[(2R,5Z)-2-carboxy-4-methylthiazol-5(2H)-ylidene]ethyl phosphate + 2 H2O + H(+). It functions in the pathway cofactor biosynthesis; thiamine diphosphate biosynthesis. Its function is as follows. Catalyzes the rearrangement of 1-deoxy-D-xylulose 5-phosphate (DXP) to produce the thiazole phosphate moiety of thiamine. Sulfur is provided by the thiocarboxylate moiety of the carrier protein ThiS. In vitro, sulfur can be provided by H(2)S. The protein is Thiazole synthase of Corynebacterium glutamicum (strain ATCC 13032 / DSM 20300 / JCM 1318 / BCRC 11384 / CCUG 27702 / LMG 3730 / NBRC 12168 / NCIMB 10025 / NRRL B-2784 / 534).